The primary structure comprises 75 residues: uncharacterized protein (75 aa).

The first 19 residues, 1 to 19, serve as a signal peptide directing secretion; sequence MKKTAAIISACMLTFALSA. Cys-20 is lipidated: N-palmitoyl cysteine. The S-diacylglycerol cysteine moiety is linked to residue Cys-20.

The protein to E.coli YgdR.

The protein resides in the cell membrane. This is an uncharacterized protein from Escherichia coli O6:H1 (strain CFT073 / ATCC 700928 / UPEC).